The following is a 299-amino-acid chain: Virginiamycin B lyase (299 aa).

His229 contacts substrate. Residue Glu269 coordinates Mg(2+). His271 serves as the catalytic Proton acceptor. Glu286 is a Mg(2+) binding site.

This sequence belongs to the Vgb family. Monomer. Mg(2+) is required as a cofactor.

Its function is as follows. Inactivates the type B streptogramin antibiotics by linearizing the lactone ring at the ester linkage, generating a free phenylglycine carboxylate and converting the threonyl moiety into 2-amino-butenoic acid. The polypeptide is Virginiamycin B lyase (Bordetella parapertussis (strain 12822 / ATCC BAA-587 / NCTC 13253)).